The chain runs to 258 residues: Deoxyribose-phosphate aldolase (258 aa).

The active-site Proton donor/acceptor is the Asp-102. Residue Lys-165 is the Schiff-base intermediate with acetaldehyde of the active site. Lys-199 serves as the catalytic Proton donor/acceptor.

This sequence belongs to the DeoC/FbaB aldolase family. DeoC type 2 subfamily.

The protein resides in the cytoplasm. The enzyme catalyses 2-deoxy-D-ribose 5-phosphate = D-glyceraldehyde 3-phosphate + acetaldehyde. It functions in the pathway carbohydrate degradation; 2-deoxy-D-ribose 1-phosphate degradation; D-glyceraldehyde 3-phosphate and acetaldehyde from 2-deoxy-alpha-D-ribose 1-phosphate: step 2/2. In terms of biological role, catalyzes a reversible aldol reaction between acetaldehyde and D-glyceraldehyde 3-phosphate to generate 2-deoxy-D-ribose 5-phosphate. The protein is Deoxyribose-phosphate aldolase of Vibrio campbellii (strain ATCC BAA-1116).